A 366-amino-acid polypeptide reads, in one-letter code: L-tyrosine C(3)-methyltransferase (366 aa).

The span at 1–12 shows a compositional bias: polar residues; it reads MTISLENTTVGQ. The disordered stretch occupies residues 1–22; it reads MTISLENTTVGQNPAGGPPTGK. E223 contributes to the S-adenosyl-L-methionine binding site.

It belongs to the class I-like SAM-binding methyltransferase superfamily. Cation-independent O-methyltransferase family.

The enzyme catalyses L-tyrosine + S-adenosyl-L-methionine = 3-methyl-L-tyrosine + S-adenosyl-L-homocysteine + H(+). The protein operates within antibiotic biosynthesis. In terms of biological role, C-methyltransferase that mediates the methylation of tyrosine into 3-methyl-L-tyrosine (3-Me-Tyr) in biosynthesis of saframycin A, a potent antitumor antibiotic that belongs to the tetrahydroisoquinoline family. Involved in biosynthesis of 3-hydroxy-5-methyl-O-methyltyrosine (3-OH-5-Me-OMe-Tyr), a core structure of saframycin A. The protein is L-tyrosine C(3)-methyltransferase of Streptomyces lavendulae.